Reading from the N-terminus, the 246-residue chain is Probable transcriptional regulatory protein ASA_2843 (246 aa).

This sequence belongs to the TACO1 family.

The protein localises to the cytoplasm. The sequence is that of Probable transcriptional regulatory protein ASA_2843 from Aeromonas salmonicida (strain A449).